We begin with the raw amino-acid sequence, 300 residues long: Protoheme IX farnesyltransferase (300 aa).

9 consecutive transmembrane segments (helical) span residues 31-51, 52-72, 92-112, 123-145, 152-172, 179-199, 225-245, 247-267, and 280-300; these read VMSL…NSLH, PFIS…AGAI, IVRG…MAFF, FLSA…MWLK, IVIG…SVSG, VILF…LALF, ILIY…VGMS, IIYL…SISL, and FFAY…FCRV.

Belongs to the UbiA prenyltransferase family. Protoheme IX farnesyltransferase subfamily.

It is found in the cell inner membrane. The enzyme catalyses heme b + (2E,6E)-farnesyl diphosphate + H2O = Fe(II)-heme o + diphosphate. It functions in the pathway porphyrin-containing compound metabolism; heme O biosynthesis; heme O from protoheme: step 1/1. Functionally, converts heme B (protoheme IX) to heme O by substitution of the vinyl group on carbon 2 of heme B porphyrin ring with a hydroxyethyl farnesyl side group. The sequence is that of Protoheme IX farnesyltransferase from Rickettsia bellii (strain OSU 85-389).